Here is a 390-residue protein sequence, read N- to C-terminus: tRNA (guanine(9)-N1)-methyltransferase (390 aa).

Residues 1 to 72 (MDIDEESYLN…RTAQLAEGYA (72 aa)) are disordered. The span at 43-59 (ARLEEIKPLKRAAERER) shows a compositional bias: basic and acidic residues. An SAM-dependent MTase TRM10-type domain is found at 92 to 340 (KERKEAQRRI…AVIPIRKYAP (249 aa)). Residues 246–247 (LS), Gly-266, 270–274 (DRNRH), Cys-278, Leu-292, and 305–307 (KVL) each bind S-adenosyl-L-methionine. Asp-270 functions as the Proton acceptor in the catalytic mechanism. The segment at 343 to 390 (KTKRAKTETKRNEKEEEEVECTSAEGEEDIGVIEESAEVDPEDVFSNQ) is disordered. The span at 347–356 (AKTETKRNEK) shows a compositional bias: basic and acidic residues. Over residues 357 to 390 (EEEEVECTSAEGEEDIGVIEESAEVDPEDVFSNQ) the composition is skewed to acidic residues.

This sequence belongs to the class IV-like SAM-binding methyltransferase superfamily. TRM10 family. In terms of assembly, monomer.

The protein resides in the cytoplasm. The protein localises to the nucleus. It catalyses the reaction guanosine(9) in tRNA + S-adenosyl-L-methionine = N(1)-methylguanosine(9) in tRNA + S-adenosyl-L-homocysteine + H(+). S-adenosyl-L-methionine-dependent guanine N(1)-methyltransferase that catalyzes the formation of N(1)-methylguanine at position 9 (m1G9) in cytoplasmic tRNA. The chain is tRNA (guanine(9)-N1)-methyltransferase from Cryptococcus neoformans var. neoformans serotype D (strain JEC21 / ATCC MYA-565) (Filobasidiella neoformans).